We begin with the raw amino-acid sequence, 1068 residues long: Leucine zipper protein 1 (1068 aa).

Residue Ala2 is modified to N-acetylalanine. The stretch at 11 to 354 forms a coiled coil; the sequence is ASNRHLRFKL…KLQVRKQKEL (344 aa). 3 disordered regions span residues 251-292, 375-402, and 432-558; these read LSSK…VKDL, TKLK…KRER, and AAKA…QAVE. Residues 254-292 show a composition bias toward basic and acidic residues; it reads KESKRKGSLDYLKQVENETRDKSENEKNRNQEDNKVKDL. Phosphoserine occurs at positions 256, 261, 395, 513, 571, 575, 612, and 660. A compositionally biased stretch (polar residues) spans 510–519; that stretch reads RTFSDSTHVS. The segment at 677–700 is disordered; it reads TTITPEPEPKPQPNSREKVKSRGG. Thr680 is subject to Phosphothreonine. Phosphoserine is present on residues Ser691 and Ser746. The interval 782–829 is disordered; that stretch reads QKSTSKSVTSKVTSSITIYPSDSSGPRAVPSEAPRERHTSTSNIQVGP. Residues 785 to 796 show a composition bias toward low complexity; the sequence is TSKSVTSKVTSS. Residues 834 to 884 are required for interaction with FLNA; that stretch reads AISNHVSSPLELSIHKHDITLQLTEAERVGDGSPKNRAEMVVSRSSILIKP. The residue at position 906 (Ser906) is a Phosphoserine. The interval 924 to 945 is disordered; that stretch reads RDLKCSEDPPTGIGRNMEATNA. A Phosphothreonine modification is found at Thr952. Disordered stretches follow at residues 959-995 and 1033-1068; these read QPRS…ASEV and NPLE…AEED. Residues 984–994 show a composition bias toward polar residues; sequence RRTQSSLTASE. A Phosphoserine modification is found at Ser988.

Component of the CERF-1 ISWI chromatin remodeling complex (also called the CECR2-containing remodeling factor (CERF) complex) at least composed of CECR2 and SMARCA1. Component of the CERF-5 ISWI chromatin remodeling complex at least composed of CECR2 and SMARCA5/SNF2H. LUZP1 is detected as part of the CERF-1 and CERF-5 complexes in embryonic stem (ES) cells where it is involved in complex stabilization but is not detected in the complexes in the testis. Interacts (via C-terminus) with LIMA1/EPLIN; both proteins restrict ciliation and may work together to regulate this process. Interacts with myosin light chain MYL9; the interaction results in inhibition of phosphorylation of MYL9 by DAPK3. Interacts with DAPK3; the interaction is likely to occur throughout the cell cycle and reduces the LUZP1-mediated suppression of MYL9 phosphorylation. Interacts with the chromosomal passenger complex (CPC); CPC kinase activity is required for localization of LUZP1 to the centromere. Predominantly expressed in the brain (at protein level).

The protein resides in the cytoplasm. The protein localises to the cytoskeleton. It is found in the microtubule organizing center. It localises to the centrosome. Its subcellular location is the cilium basal body. The protein resides in the midbody. The protein localises to the chromosome. It is found in the centromere. It localises to the spindle. Its subcellular location is the stress fiber. The protein resides in the nucleus. The protein localises to the cell projection. It is found in the dendrite. It localises to the perikaryon. Its subcellular location is the cell junction. The protein resides in the tight junction. Its function is as follows. F-actin cross-linking protein. Stabilizes actin and acts as a negative regulator of primary cilium formation. Positively regulates the phosphorylation of both myosin II and protein phosphatase 1 regulatory subunit PPP1R12A/MYPT1 and promotes the assembly of myosin II stacks within actin stress fibers. Inhibits the phosphorylation of myosin light chain MYL9 by DAPK3 and suppresses the constriction velocity of the contractile ring during cytokinesis. Binds to microtubules and promotes epithelial cell apical constriction by up-regulating levels of diphosphorylated myosin light chain (MLC) through microtubule-dependent inhibition of MLC dephosphorylation by myosin phosphatase. Involved in regulation of cell migration, nuclear size and centriole number, probably through regulation of the actin cytoskeleton. Component of the CERF-1 and CERF-5 chromatin remodeling complexes in embryonic stem cells where it acts to stabilize the complexes. Plays a role in embryonic brain and cardiovascular development. This chain is Leucine zipper protein 1 (Luzp1), found in Mus musculus (Mouse).